A 149-amino-acid chain; its full sequence is C-type lectin domain family 2 member B (149 aa).

The Cytoplasmic portion of the chain corresponds to 1–7; it reads MMTKHKK. The chain crosses the membrane as a helical; Signal-anchor for type II membrane protein span at residues 8 to 25; it reads CFIIVGVLITTNIITLIV. Residues 26-149 lie on the Extracellular side of the membrane; sequence KLTRDSQSLC…RKWICRKRIH (124 aa). Cysteine 35 and cysteine 46 form a disulfide bridge. One can recognise a C-type lectin domain in the interval 42–145; sequence FQNKCYYFSK…CYTERKWICR (104 aa). N-linked (GlcNAc...) asparagine glycosylation is found at asparagine 57, asparagine 62, and asparagine 100. 2 disulfides stabilise this stretch: cysteine 63–cysteine 144 and cysteine 123–cysteine 136.

Homodimer. Interacts with NKp80/KLRF1. Post-translationally, (Microbial infection) Ubiquitinated by human herpesvirus 8 protein K5, leading to endolysosomal degradation. In terms of processing, N-linked glycosylated; required to enable surface expression and the extent of surface expression correlates with the number of functional conventional N-glycosylation sites. Expressed preferentially in lymphoid tissues, and in most hematopoietic cell types.

Its subcellular location is the cell membrane. The protein resides in the golgi apparatus membrane. Functionally, membrane-bound protein expressed on myeloid cells which acts as a ligand to stimulate the activating receptor NKp80/KLRF1, expressed on the surface of natural killer (NK) cells. In turn, stimulates NK-cell cytotoxicity and cytokine production leading to the cytolysis of malignant CLEC2B-expressing myeloid cells. The chain is C-type lectin domain family 2 member B (CLEC2B) from Homo sapiens (Human).